The sequence spans 204 residues: Cytochrome c biogenesis ATP-binding export protein CcmA (204 aa).

The 203-residue stretch at 2–204 folds into the ABC transporter domain; it reads IEVRDLGVSR…LDAEDLGGFL (203 aa). 34–41 contributes to the ATP binding site; it reads GPNGIGKT.

It belongs to the ABC transporter superfamily. CcmA exporter (TC 3.A.1.107) family. As to quaternary structure, the complex is composed of two ATP-binding proteins (CcmA) and two transmembrane proteins (CcmB).

Its subcellular location is the cell inner membrane. The catalysed reaction is heme b(in) + ATP + H2O = heme b(out) + ADP + phosphate + H(+). Its function is as follows. Part of the ABC transporter complex CcmAB involved in the biogenesis of c-type cytochromes; once thought to export heme, this seems not to be the case, but its exact role is uncertain. Responsible for energy coupling to the transport system. This Ruegeria sp. (strain TM1040) (Silicibacter sp.) protein is Cytochrome c biogenesis ATP-binding export protein CcmA.